The sequence spans 374 residues: MALHSLIADARRLVVKVGSSLVTNDGRGLDQAAIARWAAQIAALRAAGKEVVLVSSGAIAEGMQRLGWAKRPKEIHELQAAAAVGQMGLAQVYESEFARHSIRTAQVLLTHGDLADRERYLNARSTLLTLLSLGVVPIINENDTVVTDEIKFGDNDTLGALVTNLIEGDALIILTDQRGLYTADPRKDPGARFVDEAQAGTPDLEQMAGGAGSSIGKGGMLTKILAAKRAAKSGAHTIIASGREADVLARLASGEAIGTQLRAPTGRMAARKQWMIDHLQLRGRVVLDAGAVEKLTAGGKSLLPIGVTEVQGEFARGEVISCVDAAGLEVARGLTNYSSAEARLIARKASSEIEAVLGYVSAAELVHRDNLVLL.

Lys16 provides a ligand contact to ATP. Substrate contacts are provided by Ser56, Asp143, and Asn155. ATP is bound at residue 175–176 (TD). Residues 282-360 (RGRVVLDAGA…SEIEAVLGYV (79 aa)) form the PUA domain.

This sequence belongs to the glutamate 5-kinase family.

It is found in the cytoplasm. The enzyme catalyses L-glutamate + ATP = L-glutamyl 5-phosphate + ADP. The protein operates within amino-acid biosynthesis; L-proline biosynthesis; L-glutamate 5-semialdehyde from L-glutamate: step 1/2. Functionally, catalyzes the transfer of a phosphate group to glutamate to form L-glutamate 5-phosphate. The protein is Glutamate 5-kinase of Ralstonia pickettii (strain 12J).